The sequence spans 343 residues: Vancomycin C-type resistance protein VanC1 (343 aa).

Positions 134–336 (HQLADTMGIA…YEILVEQLIA (203 aa)) constitute an ATP-grasp domain. 164-219 (IQDHGFPIFIKPNEAGSSKGITKVTDKTALQSALTTAFAYGSTVLIQKAIAGIEIG) is a binding site for ATP. Residues D290, E303, and N305 each contribute to the Mg(2+) site. The Mn(2+) site is built by D290, E303, and N305.

It belongs to the D-alanine--D-alanine ligase family. Mg(2+) is required as a cofactor. Requires Mn(2+) as cofactor.

It localises to the cell membrane. It catalyses the reaction D-serine + D-alanine + ATP = D-alanyl-D-serine + ADP + phosphate + H(+). Its function is as follows. D-alanine--D-alanine ligase of altered specificity, which catalyzes synthesis of D-Ala-D-Ser; produces a peptidoglycan which does not terminate in D-alanine but in D-serine, thus probably reducing affinity for vancomycin. Together with VanT and VanXYC, required for vancomycin resistance in E.gallinarum strain BM4174. In Enterococcus gallinarum, this protein is Vancomycin C-type resistance protein VanC1.